Consider the following 120-residue polypeptide: MSIVRSSVHAKWVVGKVIGTAMIKTAKVRATRLVLDPYLLKYFNKRKTYFAHDALQQCSVGDIVLLRALPVPRSKHVKHELAEIIFKVGRVIDPVTGKPCAGTAYLESPLSEPREELKVS.

Residues 1 to 20 (MSIVRSSVHAKWVVGKVIGT) constitute a mitochondrion transit peptide.

This sequence belongs to the universal ribosomal protein uS17 family. Component of the mitochondrial ribosome small subunit (28S) which comprises a 12S rRNA and about 30 distinct proteins.

Its subcellular location is the mitochondrion. The polypeptide is Small ribosomal subunit protein uS17m (Mrps17) (Mus musculus (Mouse)).